Consider the following 66-residue polypeptide: Phylloseptin-H8 (66 aa).

Positions 1–22 (MAFLKKSLFLVLFLGLVSLSIC) are cleaved as a signal peptide. The propeptide occupies 23-44 (EEEKRETEEEENDQEEDDKSEE). Positions 25–44 (EKRETEEEENDQEEDDKSEE) are disordered. Residues 30-41 (EEEENDQEEDDK) are compositionally biased toward acidic residues. Leu-65 is subject to Leucine amide.

Expressed by the skin glands.

The protein localises to the secreted. Functionally, has antimicrobial activity. The sequence is that of Phylloseptin-H8 from Pithecopus hypochondrialis (Orange-legged leaf frog).